Consider the following 149-residue polypeptide: Transcriptional repressor NrdR (149 aa).

The segment at 3–34 is a zinc-finger region; sequence CPFCFAVDTKVIDSRLVGEGSSVRRRRQCLVC. An ATP-cone domain is found at 49 to 139; it reads PRVVKSNDVR…VYRSFEDIKE (91 aa).

The protein belongs to the NrdR family. Requires Zn(2+) as cofactor.

Its function is as follows. Negatively regulates transcription of bacterial ribonucleotide reductase nrd genes and operons by binding to NrdR-boxes. This is Transcriptional repressor NrdR from Escherichia coli O139:H28 (strain E24377A / ETEC).